A 72-amino-acid chain; its full sequence is Translation initiation factor IF-1 (72 aa).

The 72-residue stretch at 1–72 folds into the S1-like domain; the sequence is MAKDDVIEID…DKGRITFRYK (72 aa).

Belongs to the IF-1 family. In terms of assembly, component of the 30S ribosomal translation pre-initiation complex which assembles on the 30S ribosome in the order IF-2 and IF-3, IF-1 and N-formylmethionyl-tRNA(fMet); mRNA recruitment can occur at any time during PIC assembly.

It localises to the cytoplasm. In terms of biological role, one of the essential components for the initiation of protein synthesis. Stabilizes the binding of IF-2 and IF-3 on the 30S subunit to which N-formylmethionyl-tRNA(fMet) subsequently binds. Helps modulate mRNA selection, yielding the 30S pre-initiation complex (PIC). Upon addition of the 50S ribosomal subunit IF-1, IF-2 and IF-3 are released leaving the mature 70S translation initiation complex. The chain is Translation initiation factor IF-1 from Campylobacter jejuni subsp. doylei (strain ATCC BAA-1458 / RM4099 / 269.97).